Reading from the N-terminus, the 354-residue chain is Histidinol-phosphate aminotransferase (354 aa).

Lys222 carries the N6-(pyridoxal phosphate)lysine modification.

It belongs to the class-II pyridoxal-phosphate-dependent aminotransferase family. Histidinol-phosphate aminotransferase subfamily. Homodimer. Pyridoxal 5'-phosphate is required as a cofactor.

It carries out the reaction L-histidinol phosphate + 2-oxoglutarate = 3-(imidazol-4-yl)-2-oxopropyl phosphate + L-glutamate. It functions in the pathway amino-acid biosynthesis; L-histidine biosynthesis; L-histidine from 5-phospho-alpha-D-ribose 1-diphosphate: step 7/9. The chain is Histidinol-phosphate aminotransferase from Leuconostoc citreum (strain KM20).